We begin with the raw amino-acid sequence, 485 residues long: Aspartyl/glutamyl-tRNA(Asn/Gln) amidotransferase subunit B (485 aa).

The protein belongs to the GatB/GatE family. GatB subfamily. Heterotrimer of A, B and C subunits.

The enzyme catalyses L-glutamyl-tRNA(Gln) + L-glutamine + ATP + H2O = L-glutaminyl-tRNA(Gln) + L-glutamate + ADP + phosphate + H(+). It carries out the reaction L-aspartyl-tRNA(Asn) + L-glutamine + ATP + H2O = L-asparaginyl-tRNA(Asn) + L-glutamate + ADP + phosphate + 2 H(+). Allows the formation of correctly charged Asn-tRNA(Asn) or Gln-tRNA(Gln) through the transamidation of misacylated Asp-tRNA(Asn) or Glu-tRNA(Gln) in organisms which lack either or both of asparaginyl-tRNA or glutaminyl-tRNA synthetases. The reaction takes place in the presence of glutamine and ATP through an activated phospho-Asp-tRNA(Asn) or phospho-Glu-tRNA(Gln). This Bordetella petrii (strain ATCC BAA-461 / DSM 12804 / CCUG 43448) protein is Aspartyl/glutamyl-tRNA(Asn/Gln) amidotransferase subunit B.